The chain runs to 692 residues: Alpha-amylase SusG (692 aa).

The first 22 residues, Met-1–Ala-22, serve as a signal peptide directing secretion. Cys-23 is lipidated: N-palmitoyl cysteine. Cys-23 is lipidated: S-diacylglycerol cysteine. 5 residues coordinate Mg(2+): Asp-73, Asp-75, Asp-77, Tyr-79, and Asp-81. Asn-153 serves as a coordination point for Ca(2+). Starch binding regions lie at residues His-154, Tyr-260–Glu-263, and Asn-330–Phe-333. Residue Asp-352 participates in Ca(2+) binding. Positions Arg-386–His-392 are starch binding. Asp-388 serves as the catalytic Nucleophile. Residue His-392 coordinates Ca(2+). Residue Glu-431 is the Proton donor of the active site. Residues Asp-437 and Arg-457 are each a region of interest (starch binding).

It belongs to the glycosyl hydrolase 13 family. In terms of assembly, monomer. It depends on Ca(2+) as a cofactor.

The protein resides in the cell outer membrane. The catalysed reaction is Endohydrolysis of (1-&gt;4)-alpha-D-glucosidic linkages in polysaccharides containing three or more (1-&gt;4)-alpha-linked D-glucose units.. It functions in the pathway glycan degradation; starch degradation. Alpha-amylase that cleaves starch into oligosaccharides before internalization for degradation, the first step in starch degradation. The chain is Alpha-amylase SusG (susG) from Bacteroides thetaiotaomicron (strain ATCC 29148 / DSM 2079 / JCM 5827 / CCUG 10774 / NCTC 10582 / VPI-5482 / E50).